The chain runs to 3059 residues: Genome polyprotein (3059 aa).

Positions 154 to 298 (GVTPYSVQQL…ESTMLSTHHY (145 aa)) constitute a Peptidase S30 domain. Residues His-207, Asp-216, and Ser-249 each act as for P1 proteinase activity in the active site. The Involved in interaction with stylet and aphid transmission motif lies at 349–352 (KITC). Positions 607-609 (PTK) match the Involved in virions binding and aphid transmission motif. One can recognise a Peptidase C6 domain in the interval 633–755 (MYIAKSGYCY…DSEMKHYRVG (123 aa)). Active-site for helper component proteinase activity residues include Cys-641 and His-714. The region spanning 1226–1378 (QIAHDLHTDI…TQYPVEIRVE (153 aa)) is the Helicase ATP-binding domain. Residue 1239 to 1246 (GAVGSGKS) coordinates ATP. A DEFH box motif is present at residues 1328 to 1331 (DEFH). Positions 1397-1556 (DLTSKCDNLL…GLPISTQSVT (160 aa)) constitute a Helicase C-terminal domain. Positions 1883-1890 (KKGKTKGK) match the Nuclear localization signal motif. At Tyr-1905 the chain carries O-(5'-phospho-RNA)-tyrosine. The Peptidase C4 domain occupies 2032 to 2250 (STSMFRGVRD…VCWGSFHLQD (219 aa)). Active-site for nuclear inclusion protein A activity residues include His-2077, Asp-2112, and Cys-2182. The 125-residue stretch at 2516–2640 (WVYCDADGSQ…AIRPDMEHKL (125 aa)) folds into the RdRp catalytic domain. A Phosphothreonine modification is found at Thr-3042.

The protein belongs to the potyviridae genome polyprotein family. In terms of assembly, interacts with host eIF4E protein (via cap-binding region); this interaction mediates the translation of the VPg-viral RNA conjugates. Part of a complex that comprises VPg, RNA, host EIF4E and EIF4G; this interaction mediates the translation of the VPg-viral RNA conjugates. VPg is uridylylated by the polymerase and is covalently attached to the 5'-end of the genomic RNA. This uridylylated form acts as a nucleotide-peptide primer for the polymerase. Post-translationally, phosphorylation inhibits the RNA-binding capacity of the capsid protein. In terms of processing, potyviral RNA is expressed as two polyproteins which undergo post-translational proteolytic processing. Genome polyprotein is processed by NIa-pro, P1 and HC-pro proteinases resulting in the production of at least ten individual proteins. P3N-PIPO polyprotein is cleaved by P1 and HC-pro proteinases resulting in the production of three individual proteins. The P1 proteinase and the HC-pro cleave only their respective C-termini autocatalytically. 6K1 is essential for proper proteolytic separation of P3 from CI.

Its subcellular location is the host cytoplasmic vesicle. The protein resides in the host nucleus. The protein localises to the virion. It catalyses the reaction RNA(n) + a ribonucleoside 5'-triphosphate = RNA(n+1) + diphosphate. The enzyme catalyses Hydrolyzes glutaminyl bonds, and activity is further restricted by preferences for the amino acids in P6 - P1' that vary with the species of potyvirus, e.g. Glu-Xaa-Xaa-Tyr-Xaa-Gln-|-(Ser or Gly) for the enzyme from tobacco etch virus. The natural substrate is the viral polyprotein, but other proteins and oligopeptides containing the appropriate consensus sequence are also cleaved.. It carries out the reaction Hydrolyzes a Gly-|-Gly bond at its own C-terminus, commonly in the sequence -Tyr-Xaa-Val-Gly-|-Gly, in the processing of the potyviral polyprotein.. Required for aphid transmission and also has proteolytic activity. Only cleaves a Gly-Gly dipeptide at its own C-terminus. Interacts with virions and aphid stylets. Acts as a suppressor of RNA-mediated gene silencing, also known as post-transcriptional gene silencing (PTGS), a mechanism of plant viral defense that limits the accumulation of viral RNAs. May have RNA-binding activity. In terms of biological role, has helicase activity. It may be involved in replication. Functionally, indispensable for virus replication. Reduces the abundance of host transcripts related to jasmonic acid biosynthesis therefore altering the host defenses. In order to increase its own stability, decreases host protein degradation pathways. Its function is as follows. Indispensable for virus replication. Mediates the cap-independent, EIF4E-dependent translation of viral genomic RNAs. Binds to the cap-binding site of host EIF4E and thus interferes with the host EIF4E-dependent mRNA export and translation. VPg-RNA directly binds EIF4E and is a template for transcription. Also forms trimeric complexes with EIF4E-EIF4G, which are templates for translation. In terms of biological role, has RNA-binding and proteolytic activities. Functionally, an RNA-dependent RNA polymerase that plays an essential role in the virus replication. Its function is as follows. Involved in aphid transmission, cell-to-cell and systemis movement, encapsidation of the viral RNA and in the regulation of viral RNA amplification. The protein is Genome polyprotein of Potato virus A (PVA).